The following is a 533-amino-acid chain: Di/tripeptide-binding protein 4 (533 aa).

The N-terminal stretch at 1-25 (MLHPLLRHLPLALALALCAAGAAQA) is a signal peptide.

Belongs to the bacterial solute-binding protein 5 family. The complex is composed of two ATP-binding proteins (DppD and DppF), two transmembrane proteins (DppB and DppC) and a solute-binding protein (DppA4). Five orthologous SBPs (DppA1-A5) are present in P.aeruginosa, which increases the substrate specificity of the DppBCDF transporter.

In terms of biological role, part of the ABC transporter DppABCDF involved in the uptake of various di/tripeptides. Prefers dipeptides with acidic residues at the C-terminal end. Efficiently uses tripeptides. The chain is Di/tripeptide-binding protein 4 from Pseudomonas aeruginosa (strain UCBPP-PA14).